The primary structure comprises 179 residues: Large ribosomal subunit protein uL5 (179 aa).

The protein belongs to the universal ribosomal protein uL5 family. In terms of assembly, part of the 50S ribosomal subunit; part of the 5S rRNA/L5/L18/L25 subcomplex. Contacts the 5S rRNA and the P site tRNA. Forms a bridge to the 30S subunit in the 70S ribosome.

This is one of the proteins that bind and probably mediate the attachment of the 5S RNA into the large ribosomal subunit, where it forms part of the central protuberance. In the 70S ribosome it contacts protein S13 of the 30S subunit (bridge B1b), connecting the 2 subunits; this bridge is implicated in subunit movement. Contacts the P site tRNA; the 5S rRNA and some of its associated proteins might help stabilize positioning of ribosome-bound tRNAs. This Paramagnetospirillum magneticum (strain ATCC 700264 / AMB-1) (Magnetospirillum magneticum) protein is Large ribosomal subunit protein uL5.